The sequence spans 134 residues: Terepressin/terephysin (134 aa).

An N-terminal signal peptide occupies residues 1 to 33; the sequence is MKCSVLQMSRLSWTACVLLLPLLLLTLQGGVQG. Residues Cys34 and Cys39 are joined by a disulfide bond. The propeptide occupies 44 to 50; it reads KRAVDSV. Disulfide bonds link Cys56-Cys100, Cys59-Cys73, Cys67-Cys90, Cys74-Cys80, Cys107-Cys121, Cys115-Cys133, and Cys122-Cys127.

Belongs to the vasopressin/oxytocin family. Contains 7 disulfide bonds. Expressed by the venom duct.

It localises to the secreted. This Terebra anilis (Auger snail) protein is Terepressin/terephysin.